The sequence spans 191 residues: MINITEAAQTHFAKLLANQEPGTQIRVFVINPGTPTAECGVSYCPPDAVEATDTELKFDQLSAYVDELSAPFLEEAEIDFVTDQLGSQLTLKAPNAKMRKVSDDSPLAERVEYVLQSQINPQLAGHGGRVSLMEITDDGFAILQFGGGCNGCSMVDVTLKEGIEKELLNMFPELKGVKDLTEHQRGEHSYY.

[4Fe-4S] cluster contacts are provided by Cys149 and Cys152.

The protein belongs to the NfuA family. As to quaternary structure, homodimer. It depends on [4Fe-4S] cluster as a cofactor.

Its function is as follows. Involved in iron-sulfur cluster biogenesis. Binds a 4Fe-4S cluster, can transfer this cluster to apoproteins, and thereby intervenes in the maturation of Fe/S proteins. Could also act as a scaffold/chaperone for damaged Fe/S proteins. This chain is Fe/S biogenesis protein NfuA, found in Photorhabdus laumondii subsp. laumondii (strain DSM 15139 / CIP 105565 / TT01) (Photorhabdus luminescens subsp. laumondii).